The following is a 132-amino-acid chain: MRHRHSGRQLNRNSSHRKAMFKNMVTSLVEHELIKTTLPKAKELRRYAEPLITLSKSDSVANRRLAFARLGNKATVGKLFNELGPRYEGRPGGYLRIMKCGFRAGDKAPMAYVELVDRPAPVAAEPVESSED.

It belongs to the bacterial ribosomal protein bL17 family. As to quaternary structure, part of the 50S ribosomal subunit. Contacts protein L32.

This chain is Large ribosomal subunit protein bL17, found in Saccharophagus degradans (strain 2-40 / ATCC 43961 / DSM 17024).